The primary structure comprises 347 residues: S-adenosylmethionine:tRNA ribosyltransferase-isomerase (347 aa).

The protein belongs to the QueA family. Monomer.

It localises to the cytoplasm. It carries out the reaction 7-aminomethyl-7-carbaguanosine(34) in tRNA + S-adenosyl-L-methionine = epoxyqueuosine(34) in tRNA + adenine + L-methionine + 2 H(+). Its pathway is tRNA modification; tRNA-queuosine biosynthesis. Its function is as follows. Transfers and isomerizes the ribose moiety from AdoMet to the 7-aminomethyl group of 7-deazaguanine (preQ1-tRNA) to give epoxyqueuosine (oQ-tRNA). The protein is S-adenosylmethionine:tRNA ribosyltransferase-isomerase of Halalkalibacterium halodurans (strain ATCC BAA-125 / DSM 18197 / FERM 7344 / JCM 9153 / C-125) (Bacillus halodurans).